An 827-amino-acid chain; its full sequence is MVRNKYTLTTAGKSPSKKSRTGSLSKQHDATGDDDGETGTLDGSGSAAGSPVGGGTDAAAKRCDGGSVHKQNLYIISFPVIFVFNVLRSLLYQLFIVFRYVYNFTTKVVYRPVRKECGLEIVINTDQHGHHHHHHHRHSSHSIHSTAAAHQLQQHQQQQQHQYSLLQQEQHGVTEPQQQQQQQHQAAHPLQCSQSGILVNGEGREMSIQRSASGSQVGPGDPLLAKQKHHHRRAFEYISKALKIDEDNEDQKELAIELYRKGILELERGIAVECWGGRGEVWERAQRLHDKMQTNLSMARDRLQFLGMLCVCVSVQRKHLHPTRTTLPYRDVKSKLHTTPTENRMVSFNENCTITTNHHPARGTAASSRPTTAATAPATPSLPIKQTASEASGRKLTVGYKRPGNLGVMNKSQTLPRSMGGTRTTPTGTGGAGGIAGGLGNGGTYGGSIVGGGAGMPKIVPKPAATPPAIRRQFSVSIPIPGSSPVRKASNGYGSKNTPPPRSKTPLAGQQPQQPQQQQQQQPQISVKGVEPKLVQIIMDEIVEGGAKVQWQDIAGQEVAKQALQEMVILPSVRPELFTGLRTPAKGLLLFGPPGNGKTLLARAVATECSATFFSISAATLTSKYVGDGEKLVRALFAVARELQPSIIFIDEVDSVLSERSSNEHEATRRLKTEFLVQFDGLPANSEADRIVVMAATNRPQELDEAALRRFPKRVYVTLPDRDTRELLLRRLLQKQGSPLSDADLAHLAQLTEGYSGSDLTALARDAALEPIRELNVEEVKNMDPTKLRSIRESDFHNSLKRIRRSVAPQSLAAYEKWLQDFGDVTL.

Residues 1–13 (MVRNKYTLTTAGK) are compositionally biased toward polar residues. A disordered region spans residues 1–58 (MVRNKYTLTTAGKSPSKKSRTGSLSKQHDATGDDDGETGTLDGSGSAAGSPVGGGTDA). Topologically, residues 1–79 (MVRNKYTLTT…KQNLYIISFP (79 aa)) are cytoplasmic. Low complexity predominate over residues 38–50 (TGTLDGSGSAAGS). The segment at residues 80–100 (VIFVFNVLRSLLYQLFIVFRY) is an intramembrane region (helical). Residues 101–827 (VYNFTTKVVY…WLQDFGDVTL (727 aa)) lie on the Cytoplasmic side of the membrane. Disordered regions lie at residues 127 to 190 (QHGH…AHPL) and 207 to 229 (SIQR…KQKH). Positions 129–141 (GHHHHHHHRHSSH) are enriched in basic residues. A compositionally biased stretch (low complexity) spans 142-190 (SIHSTAAAHQLQQHQQQQQHQYSLLQQEQHGVTEPQQQQQQQHQAAHPL). The region spanning 231–306 (HRRAFEYISK…SMARDRLQFL (76 aa)) is the MIT domain. 3 disordered regions span residues 358–381 (HHPA…ATPS), 398–433 (VGYK…GGAG), and 476–526 (VSIP…PQIS). Low complexity predominate over residues 364-381 (TAASSRPTTAATAPATPS). Composition is skewed to low complexity over residues 476–486 (VSIPIPGSSPV) and 510–524 (QQPQ…QQPQ). Position 592-599 (592-599 (GPPGNGKT)) interacts with ATP.

It belongs to the AAA ATPase family. Spastin subfamily. In terms of assembly, homohexamer. The homohexamer is stabilized by ATP-binding. The homohexamer may adopt a ring conformation through which microtubules pass prior to being severed. Interacts with microtubules.

It is found in the membrane. The protein localises to the cytoplasm. The protein resides in the cytoskeleton. Its subcellular location is the microtubule organizing center. It localises to the centrosome. The enzyme catalyses n ATP + n H2O + a microtubule = n ADP + n phosphate + (n+1) alpha/beta tubulin heterodimers.. Its function is as follows. ATP-dependent microtubule severing protein. Microtubule severing may promote reorganization of cellular microtubule arrays and the release of microtubules from the microtubule organizing center following nucleation. In Anopheles gambiae (African malaria mosquito), this protein is Spastin (spas).